The sequence spans 292 residues: tRNA pseudouridine synthase B (292 aa).

The active-site Nucleophile is Asp-40.

Belongs to the pseudouridine synthase TruB family. Type 1 subfamily.

The catalysed reaction is uridine(55) in tRNA = pseudouridine(55) in tRNA. Responsible for synthesis of pseudouridine from uracil-55 in the psi GC loop of transfer RNAs. The protein is tRNA pseudouridine synthase B of Mycoplasma capricolum subsp. capricolum (strain California kid / ATCC 27343 / NCTC 10154).